The chain runs to 314 residues: tRNA dimethylallyltransferase (314 aa).

40 to 47 is an ATP binding site; sequence GPTASGKS. 42–47 contacts substrate; the sequence is TASGKS.

The protein belongs to the IPP transferase family. In terms of assembly, monomer. The cofactor is Mg(2+).

The enzyme catalyses adenosine(37) in tRNA + dimethylallyl diphosphate = N(6)-dimethylallyladenosine(37) in tRNA + diphosphate. Catalyzes the transfer of a dimethylallyl group onto the adenine at position 37 in tRNAs that read codons beginning with uridine, leading to the formation of N6-(dimethylallyl)adenosine (i(6)A). This Cereibacter sphaeroides (strain KD131 / KCTC 12085) (Rhodobacter sphaeroides) protein is tRNA dimethylallyltransferase.